The following is a 208-amino-acid chain: AN1-type zinc finger protein 6 (208 aa).

The segment at 8-42 (SQVPMLCSTGCGFYGNPRTNGMCSVCYKEHLQRQN) adopts an A20-type zinc-finger fold. Cys-14, Cys-18, Cys-30, and Cys-33 together coordinate Zn(2+). A compositionally biased stretch (polar residues) spans 41–68 (QNSSNGRISPPATSVSSLSESLPVQCTD). Residues 41–140 (QNSSNGRISP…PSEEQSKSLE (100 aa)) form a disordered region. Position 49 is a phosphoserine (Ser-49). The span at 75–94 (QSTLDSTSSSMQPSPVSNQS) shows a compositional bias: low complexity. 2 stretches are compositionally biased toward polar residues: residues 95–110 (LLSESVASSQLDSTSV) and 120–133 (LQASVSDTAQQPSE). An AN1-type zinc finger spans residues 143–189 (KQKKNRCFMCRKKVGLTGFECRCGNVYCGVHRYSDVHNCSYNYKADA). Zn(2+) contacts are provided by Cys-149, Cys-152, Cys-163, Cys-165, Cys-170, His-173, His-179, and Cys-181. Position 204 is an N6-acetyllysine (Lys-204).

In terms of assembly, interacts with PKN1. Interacts with TRAF2. Interacts with mono- and polyubiquitin. Interacts with PEX6. Interacts with PEX5 (Cys-linked ubiquitinated).

The protein localises to the cytoplasm. Involved in regulation of TNF-alpha induced NF-kappa-B activation and apoptosis. Involved in modulation of 'Lys-48'-linked polyubiquitination status of TRAF2 and decreases association of TRAF2 with RIPK1. Required for PTS1 target sequence-dependent protein import into peroxisomes and PEX5 stability; may cooperate with PEX6. In vitro involved in PEX5 export from the cytosol to peroxisomes. The protein is AN1-type zinc finger protein 6 (ZFAND6) of Pongo abelii (Sumatran orangutan).